A 120-amino-acid chain; its full sequence is Myohemerythrin (120 aa).

Fe cation-binding residues include H26, H56, E60, H75, H79, H108, and D113.

It belongs to the hemerythrin family.

Functionally, myohemerythrin is an oxygen-binding protein found in the retractor muscles of certain worms. The oxygen-binding site contains two iron atoms. This chain is Myohemerythrin, found in Sipunculus nudus (Sipunculan worm).